We begin with the raw amino-acid sequence, 504 residues long: ATP synthase subunit alpha 1 (504 aa).

An ATP-binding site is contributed by 170–177 (GDRQIGKT).

The protein belongs to the ATPase alpha/beta chains family. F-type ATPases have 2 components, CF(1) - the catalytic core - and CF(0) - the membrane proton channel. CF(1) has five subunits: alpha(3), beta(3), gamma(1), delta(1), epsilon(1). CF(0) has three main subunits: a(1), b(2) and c(9-12). The alpha and beta chains form an alternating ring which encloses part of the gamma chain. CF(1) is attached to CF(0) by a central stalk formed by the gamma and epsilon chains, while a peripheral stalk is formed by the delta and b chains.

It is found in the cell inner membrane. It catalyses the reaction ATP + H2O + 4 H(+)(in) = ADP + phosphate + 5 H(+)(out). Produces ATP from ADP in the presence of a proton gradient across the membrane. The alpha chain is a regulatory subunit. The sequence is that of ATP synthase subunit alpha 1 from Syntrophus aciditrophicus (strain SB).